A 150-amino-acid chain; its full sequence is Ribosome-binding factor A (150 aa).

The tract at residues 126 to 150 is disordered; it reads EVARDLSHDDDEDGGADEAPRNGDE.

This sequence belongs to the RbfA family. In terms of assembly, monomer. Binds 30S ribosomal subunits, but not 50S ribosomal subunits or 70S ribosomes.

It is found in the cytoplasm. Its function is as follows. One of several proteins that assist in the late maturation steps of the functional core of the 30S ribosomal subunit. Associates with free 30S ribosomal subunits (but not with 30S subunits that are part of 70S ribosomes or polysomes). Required for efficient processing of 16S rRNA. May interact with the 5'-terminal helix region of 16S rRNA. The polypeptide is Ribosome-binding factor A (Brucella abortus (strain S19)).